The following is a 1501-amino-acid chain: Opaque-specific ABC transporter CDR3 (1501 aa).

Residues 1-502 (MAKTSQAEGQ…KRYWDRMRGD (502 aa)) lie on the Cytoplasmic side of the membrane. Positions 58–87 (TYTTATMHPNGINPISDKTDPTLDPESPSF) are disordered. Residues 140 to 395 (KYARNIFNKF…FKKMGFVCQD (256 aa)) form the ABC transporter 1 domain. A helical transmembrane segment spans residues 503–523 (IIVPLSTVAGNIAMALILSSV). An N-linked (GlcNAc...) asparagine glycan is attached at Asn530. A run of 5 helical transmembrane segments spans residues 540 to 560 (VMYY…YNMY), 589 to 609 (FPLK…MVNF), 614 to 634 (GAFF…SHLF), 653 to 673 (LLLF…YMLG), and 755 to 775 (FGVL…FVQT). Topologically, residues 776 to 1175 (NKSSISKGET…LFQQYWRTPS (400 aa)) are cytoplasmic. The region spanning 840–1083 (FHWRNLTYTV…LIEYFERNGA (244 aa)) is the ABC transporter 2 domain. 876-883 (GASGAGKT) is a binding site for ATP. The next 7 helical transmembrane spans lie at 1176-1196 (YIYS…FTYY), 1212-1232 (IFSM…LFVT), 1261-1281 (IPYQ…PVGL), 1297-1317 (LMWL…QFCI), 1325-1345 (YAAN…GVIA), 1353-1375 (FWVF…SIGL), and 1451-1471 (GIFI…YWLF).

It belongs to the ABC transporter superfamily. ABCG family. PDR (TC 3.A.1.205) subfamily.

It localises to the membrane. The sequence is that of Opaque-specific ABC transporter CDR3 (CDR3) from Candida albicans (Yeast).